A 450-amino-acid polypeptide reads, in one-letter code: Glucose-6-phosphate isomerase (450 aa).

E289 serves as the catalytic Proton donor. Residues H310 and K424 contribute to the active site.

This sequence belongs to the GPI family.

It localises to the cytoplasm. It catalyses the reaction alpha-D-glucose 6-phosphate = beta-D-fructose 6-phosphate. Its pathway is carbohydrate biosynthesis; gluconeogenesis. It functions in the pathway carbohydrate degradation; glycolysis; D-glyceraldehyde 3-phosphate and glycerone phosphate from D-glucose: step 2/4. Functionally, catalyzes the reversible isomerization of glucose-6-phosphate to fructose-6-phosphate. The sequence is that of Glucose-6-phosphate isomerase from Leptospira biflexa serovar Patoc (strain Patoc 1 / Ames).